We begin with the raw amino-acid sequence, 27 residues long: uncharacterized protein (27 aa).

It localises to the plastid. It is found in the chloroplast. This is an uncharacterized protein from Anthoceros angustus (Hornwort).